A 469-amino-acid polypeptide reads, in one-letter code: MVLDDLGSSLRGTLDDLRGKSRLSEEDIEDIVKEIQRSLLQADVDVGLVQDLSNSIETRALDEEPPAGTTPRDWVLRIVYEELVDLVGESTELPLEEQTIMLAGLYGSGKTTTAAKMAWWFSTKGLRPAIIQTDTDRPGAYDQSKEMAERAEVDFYGDPDEDDPVKIARDGLEATENADVRIVDTAGRDGLNEELIEQIERIEQEVQPDRDLLVLDAAMGQSAKSQAADFEAAIGIDGVVITKLDGTAKGGGALAAVNETDSTIAFLGSGETVKDIERFEPSGFISRLLGMGDLKQLTERVERAMEETQEGDEEDWDPEDMLEGQFTLKDMRKQMQTMNNMGPLDQVMDMIPGLGGGLMDQLPDDAMDVTQERMQDFDVIMDSMTEEELENPRVVGQSRTKRICRGSGKPEERVRELLQQHKQMEQMLKQFQGMGDGDMERMMKQMQQGGGGGGGMGGMGGGGMGPFGD.

Residues 104–111 (GLYGSGKT), 184–188 (DTAGR), and 242–245 (TKLD) contribute to the GTP site. 2 disordered regions span residues 388–410 (ELEN…SGKP) and 447–469 (QQGG…PFGD). The span at 448-469 (QGGGGGGGMGGMGGGGMGPFGD) shows a compositional bias: gly residues.

Belongs to the GTP-binding SRP family. SRP54 subfamily. Part of the signal recognition particle protein translocation system, which is composed of SRP and FtsY. Archaeal SRP consists of a 7S RNA molecule of 300 nucleotides and two protein subunits: SRP54 and SRP19.

It localises to the cytoplasm. It carries out the reaction GTP + H2O = GDP + phosphate + H(+). Its function is as follows. Involved in targeting and insertion of nascent membrane proteins into the cytoplasmic membrane. Binds to the hydrophobic signal sequence of the ribosome-nascent chain (RNC) as it emerges from the ribosomes. The SRP-RNC complex is then targeted to the cytoplasmic membrane where it interacts with the SRP receptor FtsY. This is Signal recognition particle 54 kDa protein from Haloarcula marismortui (strain ATCC 43049 / DSM 3752 / JCM 8966 / VKM B-1809) (Halobacterium marismortui).